The following is a 302-amino-acid chain: Putative S-adenosyl-L-methionine-dependent methyltransferase MAV_2803 (302 aa).

S-adenosyl-L-methionine-binding positions include Asp-129 and 158-159 (DL).

The protein belongs to the UPF0677 family.

Exhibits S-adenosyl-L-methionine-dependent methyltransferase activity. This Mycobacterium avium (strain 104) protein is Putative S-adenosyl-L-methionine-dependent methyltransferase MAV_2803.